Reading from the N-terminus, the 680-residue chain is Methionine--tRNA ligase (680 aa).

The short motif at 15–25 is the 'HIGH' region element; sequence PYANGPVHIGH. Zn(2+) contacts are provided by Cys147, Cys150, Cys160, and Cys163. The 'KMSKS' region signature appears at 332–336; the sequence is KISTS. Position 335 (Thr335) interacts with ATP. Residues 578-680 enclose the tRNA-binding domain; that stretch reads EFEKLDIRVG…REVKPGSEVK (103 aa).

It belongs to the class-I aminoacyl-tRNA synthetase family. MetG type 1 subfamily. In terms of assembly, homodimer. The cofactor is Zn(2+).

The protein localises to the cytoplasm. The enzyme catalyses tRNA(Met) + L-methionine + ATP = L-methionyl-tRNA(Met) + AMP + diphosphate. Its function is as follows. Is required not only for elongation of protein synthesis but also for the initiation of all mRNA translation through initiator tRNA(fMet) aminoacylation. In Phocaeicola vulgatus (strain ATCC 8482 / DSM 1447 / JCM 5826 / CCUG 4940 / NBRC 14291 / NCTC 11154) (Bacteroides vulgatus), this protein is Methionine--tRNA ligase.